The chain runs to 144 residues: Putative low molecular weight protein-tyrosine-phosphatase (144 aa).

C9 functions as the Nucleophile in the catalytic mechanism. Residue R15 is part of the active site. Catalysis depends on D115, which acts as the Proton donor.

The protein belongs to the low molecular weight phosphotyrosine protein phosphatase family.

The enzyme catalyses O-phospho-L-tyrosyl-[protein] + H2O = L-tyrosyl-[protein] + phosphate. This is Putative low molecular weight protein-tyrosine-phosphatase from Klebsiella pneumoniae.